A 445-amino-acid polypeptide reads, in one-letter code: 3-phosphoshikimate 1-carboxyvinyltransferase (445 aa).

Residues K28, S29, and R33 each contribute to the 3-phosphoshikimate site. A phosphoenolpyruvate-binding site is contributed by K28. Phosphoenolpyruvate contacts are provided by G101 and R129. S175, Q177, D328, and K355 together coordinate 3-phosphoshikimate. Phosphoenolpyruvate is bound at residue Q177. Catalysis depends on D328, which acts as the Proton acceptor. The phosphoenolpyruvate site is built by R359 and R402.

This sequence belongs to the EPSP synthase family. As to quaternary structure, monomer.

The protein resides in the cytoplasm. The catalysed reaction is 3-phosphoshikimate + phosphoenolpyruvate = 5-O-(1-carboxyvinyl)-3-phosphoshikimate + phosphate. It participates in metabolic intermediate biosynthesis; chorismate biosynthesis; chorismate from D-erythrose 4-phosphate and phosphoenolpyruvate: step 6/7. Its function is as follows. Catalyzes the transfer of the enolpyruvyl moiety of phosphoenolpyruvate (PEP) to the 5-hydroxyl of shikimate-3-phosphate (S3P) to produce enolpyruvyl shikimate-3-phosphate and inorganic phosphate. The sequence is that of 3-phosphoshikimate 1-carboxyvinyltransferase from Bradyrhizobium sp. (strain BTAi1 / ATCC BAA-1182).